Reading from the N-terminus, the 93-residue chain is Large ribosomal subunit protein uL23 (93 aa).

It belongs to the universal ribosomal protein uL23 family. Part of the 50S ribosomal subunit. Contacts protein L29, and trigger factor when it is bound to the ribosome.

In terms of biological role, one of the early assembly proteins it binds 23S rRNA. One of the proteins that surrounds the polypeptide exit tunnel on the outside of the ribosome. Forms the main docking site for trigger factor binding to the ribosome. This is Large ribosomal subunit protein uL23 from Helicobacter acinonychis (strain Sheeba).